Here is a 242-residue protein sequence, read N- to C-terminus: MPAKTPELEMMDEDRLIEEVLDKFVNCHEQTYEEFLRTFTHLSKDNVTKREAFGTNSSENNFTSIKFTQRNEPNDCRLSNKAIFLHTSSQCSEEEQIMIGDGQKAGSSFQGDLNRAGKVKVDNFLDIEDLDLDEEINPQLSKDVLLLPGQVEQEVSLSVPSYIPSVAIQPVTPGTKPRPTVKAADKQSKEIVGDEVQPFSLDEEFDYDAVVLTPKFTPAEMNAIKELSKQKTKSADLEDPHD.

Ser-57 carries the post-translational modification Phosphoserine.

In terms of assembly, interacts with IFT122; the interaction associates IFTAP with IFT-A complex.

In terms of biological role, seems to play a role in ciliary BBSome localization, maybe through interaction with IFT-A complex. The chain is Intraflagellar transport-associated protein (IFTAP) from Bos taurus (Bovine).